Consider the following 931-residue polypeptide: MASPPRGWGCGELLLPFMLLGTLCEPGSGQIRYSMPEELDKGSFVGNIAKDLGLEPQELAERGVRIVSRGRTQLFALNPRSGSLVTAGRIDREELCAQSPLCVVNFNILVENKMKIYGVEVEIIDINDNFPRFRDEELKVKVNENAAAGTRLVLPFARDADVGVNSLRSYQLSSNLHFSLDVVSGTDGQKYPELVLEQPLDREKETVHDLLLTALDGGDPVLSGTTHIRVTVLDANDNAPLFTPSEYSVSVPENIPVGTRLLMLTATDPDEGINGKLTYSFRNEEEKISETFQLDSNLGEISTLQSLDYEESRFYLMEVVAQDGGALVASAKVVVTVQDVNDNAPEVILTSLTSSISEDCLPGTVIALFSVHDGDSGENGEIACSIPRNLPFKLEKSVDNYYHLLTTRDLDREETSDYNITLTVMDHGTPPLSTESHIPLKVADVNDNPPNFPQASYSTSVTENNPRGVSIFSVTAHDPDSGDNARVTYSLAEDTFQGAPLSSYVSINSDTGVLYALRSFDYEQLRDLQLWVTASDSGNPPLSSNVSLSLFVLDQNDNTPEILYPALPTDGSTGVELAPRSAEPGYLVTKVVAVDKDSGQNAWLSYRLLKASEPGLFAVGLHTGEVRTARALLDRDALKQSLVVAVEDHGQPPLSATFTVTVAVADRIPDILADLGSIKTPIDPEDLDLTLYLVVAVAAVSCVFLAFVIVLLVLRLRRWHKSRLLQAEGSRLAGVPASHFVGVDGVRAFLQTYSHEVSLTADSRKSHLIFPQPNYADTLLSEESCEKSEPLLMSDKVDANKEERRVQQAPPNTDWRFSQAQRPGTSGSQNGDDTGTWPNNQFDTEMLQAMILASASEAADGSSTLGGGAGTMGLSARYGPQFTLQHVPDYRQNVYIPGSNATLTNAAGKRDGKAPAGGNGNKKKSGKKEKK.

Residues 1 to 29 form the signal peptide; sequence MASPPRGWGCGELLLPFMLLGTLCEPGSG. 6 Cadherin domains span residues 30–133, 134–242, 243–347, 348–452, 453–562, and 570–683; these read QIRY…FPRF, RDEE…APLF, TPSE…APEV, ILTS…PPNF, PQAS…TPEI, and DGST…TPID. At 30 to 692 the chain is on the extracellular side; sequence QIRYSMPEEL…DPEDLDLTLY (663 aa). Asparagine 419 and asparagine 545 each carry an N-linked (GlcNAc...) asparagine glycan. The chain crosses the membrane as a helical span at residues 693-713; it reads LVVAVAAVSCVFLAFVIVLLV. Topologically, residues 714-931 are cytoplasmic; the sequence is LRLRRWHKSR…KKKSGKKEKK (218 aa). Disordered regions lie at residues 800–840 and 901–931; these read NKEE…WPNN and ATLTNAAGKRDGKAPAGGNGNKKKSGKKEKK. Residues 809-840 are compositionally biased toward polar residues; that stretch reads APPNTDWRFSQAQRPGTSGSQNGDDTGTWPNN. A compositionally biased stretch (basic residues) spans 921–931; that stretch reads NKKKSGKKEKK.

It is found in the cell membrane. Functionally, potential calcium-dependent cell-adhesion protein. May be involved in the establishment and maintenance of specific neuronal connections in the brain. The protein is Protocadherin gamma-A5 (PCDHGA5) of Homo sapiens (Human).